Reading from the N-terminus, the 491-residue chain is Probable CtpA-like serine protease (491 aa).

Residues 1–22 (MNDHQKNHATSQDDNTKSTPSK) form a disordered region. Polar residues predominate over residues 8 to 22 (HATSQDDNTKSTPSK). A helical membrane pass occupies residues 31–51 (LWHFILVILGIILLTSIITVV). One can recognise a PDZ domain in the interval 119 to 201 (TKQFNEGVSG…TYVTLTIKRG (83 aa)). Residues serine 324, aspartate 335, and lysine 349 each act as charge relay system in the active site.

Belongs to the peptidase S41A family.

It is found in the cell membrane. The polypeptide is Probable CtpA-like serine protease (Staphylococcus epidermidis (strain ATCC 35984 / DSM 28319 / BCRC 17069 / CCUG 31568 / BM 3577 / RP62A)).